A 206-amino-acid polypeptide reads, in one-letter code: Protein OPG030 (206 aa).

Residues Phe99–Ile181 enclose the BACK domain.

The protein belongs to the orthopoxvirus OPG030 family.

This chain is Protein OPG030 (OPG030), found in Cynomys gunnisoni (Gunnison's prairie dog).